The primary structure comprises 347 residues: UPF0284 protein SSO2213 (347 aa).

The protein belongs to the UPF0284 family.

This chain is UPF0284 protein SSO2213, found in Saccharolobus solfataricus (strain ATCC 35092 / DSM 1617 / JCM 11322 / P2) (Sulfolobus solfataricus).